The primary structure comprises 903 residues: E3 ubiquitin-protein ligase DDB_G0292642 (903 aa).

Disordered stretches follow at residues 115-137 (FTLPPTTNNNNNNTTNVLESSSD), 167-236 (LLKR…VIGS), 284-366 (VNKT…NNLK), 415-487 (TPSL…TTEI), and 549-576 (DDSEEEEEEEEEEEGEESDSESSSGSEG). Composition is skewed to low complexity over residues 120-130 (TTNNNNNNTTN) and 178-216 (TTTTTTTTTTANNNNTRRNRNNNNNNNNNANGANRTIDT). Residues 217 to 232 (SSEDDDESISSSDDDI) are compositionally biased toward acidic residues. Composition is skewed to low complexity over residues 287–301 (TSTTSTTTTTTTTTT) and 311–323 (NRNNNNNNNNNNN). Positions 313-352 (NNNNNNNNNNNKRFEIESEEESETDISSEEEENNNNNNNN) form a coiled coil. Residues 329–345 (ESEEESETDISSEEEEN) are compositionally biased toward acidic residues. Residues 346–364 (NNNNNNNSNNNNNSNNNNN) show a composition bias toward low complexity. Polar residues predominate over residues 415 to 427 (TPSLRLSSAHLPN). Over residues 428-443 (TTTTTTTTTTTTTTTT) the composition is skewed to low complexity. 2 stretches are compositionally biased toward acidic residues: residues 451-466 (NDDDESSDSDSSDSEI) and 549-568 (DDSEEEEEEEEEEEGEESDS). Residues 542 to 569 (AELVFEYDDSEEEEEEEEEEEGEESDSE) are a coiled coil. The TRIAD supradomain stretch occupies residues 612–832 (EPVECKICYM…NEYPECFDRQ (221 aa)). Residues Cys-616, Cys-619, Cys-634, His-636, Cys-639, Cys-642, Cys-661, Cys-666, Cys-704, Cys-709, Cys-725, Cys-728, Cys-733, Cys-736, His-741, Cys-746, Cys-782, and Cys-785 each coordinate Zn(2+). The segment at 616–666 (CKICYMEYDQSNEVFTLECDHVYCFDCITEHLRILITEGRVLDISCPHPQC) adopts an RING-type 1 zinc-finger fold. Residues 683–746 (NWLKYQKFSM…GEYSHEGAKC (64 aa)) form an IBR-type zinc finger. The RING-type 2; atypical zinc-finger motif lies at 782–811 (CPTCKSHIEKHDGCNHMTCINCQHQFCWLC). Residue Cys-795 is part of the active site. Zn(2+) contacts are provided by Cys-800, Cys-803, Cys-808, Cys-811, His-819, and Cys-828. A helical membrane pass occupies residues 864 to 884 (TAAFTVGAPLLLIGGAVLLCV).

The protein belongs to the RBR family. RNF14 subfamily.

It localises to the membrane. The catalysed reaction is [E2 ubiquitin-conjugating enzyme]-S-ubiquitinyl-L-cysteine + [acceptor protein]-L-lysine = [E2 ubiquitin-conjugating enzyme]-L-cysteine + [acceptor protein]-N(6)-ubiquitinyl-L-lysine.. The protein operates within protein modification; protein ubiquitination. In terms of biological role, E3 ubiquitin-protein ligase. This is E3 ubiquitin-protein ligase DDB_G0292642 from Dictyostelium discoideum (Social amoeba).